We begin with the raw amino-acid sequence, 382 residues long: ATP phosphoribosyltransferase regulatory subunit (382 aa).

The protein belongs to the class-II aminoacyl-tRNA synthetase family. HisZ subfamily. In terms of assembly, heteromultimer composed of HisG and HisZ subunits.

It is found in the cytoplasm. Its pathway is amino-acid biosynthesis; L-histidine biosynthesis; L-histidine from 5-phospho-alpha-D-ribose 1-diphosphate: step 1/9. In terms of biological role, required for the first step of histidine biosynthesis. May allow the feedback regulation of ATP phosphoribosyltransferase activity by histidine. In Lacticaseibacillus paracasei (strain ATCC 334 / BCRC 17002 / CCUG 31169 / CIP 107868 / KCTC 3260 / NRRL B-441) (Lactobacillus paracasei), this protein is ATP phosphoribosyltransferase regulatory subunit.